The chain runs to 255 residues: F-box/SPRY domain-containing protein 1 (255 aa).

Positions 3 to 51 (DPVAALCNYNVLEVIFSYLELDDLSHCSQVCKSWYHFLNDENSDVWRWH) constitute an F-box domain. One can recognise a B30.2/SPRY domain in the interval 61 to 253 (LKSDLLSSVP…VSMVYLGTPL (193 aa)).

This sequence belongs to the FBXO45/Fsn family. As to quaternary structure, component of an E3 ubiquitin ligase complex composed of hiw and Fsn.

It localises to the synapse. Its pathway is protein modification; protein ubiquitination. Functionally, required in the presynaptic motoneuron to down-regulate the levels of wnd and restrain synaptic terminal growth at the neuromuscular junction (NMJ). This Drosophila sechellia (Fruit fly) protein is F-box/SPRY domain-containing protein 1.